Reading from the N-terminus, the 327-residue chain is MISKDHLHHLDPLGTTKSYHMNTSTVSPPSPASSISLSQSAWLEVRLFYVRIAPCVVENVPDFLTLRHPRRETGASLEVNGVRVPSSQTASLKLRRDRVDRESSEVTYVSTETVRVTGCVDFEVYDNEDMVLCGNLDRIEGAWNNGTVSDPKTGWGMDCYIAMGNGHVSGPSASVFFQPKFGVSSPSVEVYIAGCCGGVPVILTKTIQASPRRKVARHVTLDAIPEDEEVGKEQDIGTIGDELARQSKVQMMESEVDEYDDSDMKMAQRYYPEGMYVDEDGQLSWFNAGVRVGVGIGLGMCLGVGIGVGLLMRSYQATTSNLRRRFL.

Residues 12-31 (PLGTTKSYHMNTSTVSPPSP) form a disordered region. Helical transmembrane passes span 183-203 (VSSPSVEVYIAGCCGGVPVIL) and 292-312 (VGVGIGLGMCLGVGIGVGLLM).

Its subcellular location is the membrane. This is an uncharacterized protein from Arabidopsis thaliana (Mouse-ear cress).